We begin with the raw amino-acid sequence, 648 residues long: MIDIILPDGSVKQYKIGVTGQEIIQSLSISLFKKTIAVEINNELIDLYIPIINTATVKAITIDSVQGIEILRHDTAHILAQAVKKLFPDTQVVIGPVIKDGFYYDFARDKPFTNKDLEVIEQEMQDIIAKNDLIQREVWLRAKAIEFFKQQKEFYKVKLIEEIPESEEISIYRQGNFVDLCRGPHSPSTGYCTKYFKLTKVSGAYWRGNSKNEVLQRIYGTAWEKKSDLDSYLHRLSEAQKRDHRKLGRELELFHFQDEAQGMPFWHDKGWTIFKIIKNYISCQIQRAGYIEVNTPMVLSQKLWEKSGHWEKFRENMFTLDTNVAEKDHNLIKDSIETKCALALKPMNCPGHIQIFNYTIKSYRDLPLRMAEFGSCHRYEPSGALYGLMRVRSFVQDDAHIFCTEDQITDETIKFCHLLKQVYQDFGFPEVKIKFSDRPEKRAGTDKIWDKAEQALIHAIQTLGEEYTINRGEGAFYGPKLEFILTDAIGREWQCGTLQVDFVLPERLNASYISSEGSKKRPVILHRAILGSFERFIGILIEHYSGRLPIWLAPIQVAVVSITDEAVNYAKQLHQELIDNNIRSTLDISNQKINYKIRNFFTAKVPLIAILGKKESESGKIAIRTLGSQEQQVISSSELIAHIRKNKK.

In terms of domain architecture, TGS spans Met1–Thr61. Residues Asp243–Pro549 are catalytic. Zn(2+)-binding residues include Cys349, His400, and His526.

Belongs to the class-II aminoacyl-tRNA synthetase family. As to quaternary structure, homodimer. The cofactor is Zn(2+).

Its subcellular location is the cytoplasm. It catalyses the reaction tRNA(Thr) + L-threonine + ATP = L-threonyl-tRNA(Thr) + AMP + diphosphate + H(+). Catalyzes the attachment of threonine to tRNA(Thr) in a two-step reaction: L-threonine is first activated by ATP to form Thr-AMP and then transferred to the acceptor end of tRNA(Thr). Also edits incorrectly charged L-seryl-tRNA(Thr). The sequence is that of Threonine--tRNA ligase from Orientia tsutsugamushi (strain Boryong) (Rickettsia tsutsugamushi).